A 678-amino-acid polypeptide reads, in one-letter code: Portal protein (678 aa).

The segment at 376–405 (PAVDHTLPGFGKGGTGRGSRPQDPGARPQQ) is disordered. The interval 422–443 (LEGYINNLFGTIERLRETNAGL) is putative leucine zipper motif. Over residues 459–470 (AGALEREQRAAD) the composition is skewed to basic and acidic residues. 2 disordered regions span residues 459 to 480 (AGAL…AGRP) and 622 to 678 (PRPP…HARR). A compositionally biased stretch (basic residues) spans 642–652 (SRSRTRTRSRS). Positions 667-678 (VERRDGRPHARR) are enriched in basic and acidic residues.

It belongs to the herpesviridae portal protein family. In terms of assembly, homododecamerizes. Interacts with terminase subunits TRM1 and TRM3.

Its subcellular location is the virion. The protein resides in the host nucleus. Its function is as follows. Forms a portal in the viral capsid through which viral DNA is translocated during DNA packaging. Assembles as a dodecamer at a single fivefold axe of the T=16 icosahedric capsid. Binds to the molecular motor that translocates the viral DNA, termed terminase. In Homo sapiens (Human), this protein is Portal protein (UL6).